The sequence spans 427 residues: 2-oxoglutarate and iron-dependent oxygenase JMJD4 (427 aa).

Positions 147 to 306 (SLVNDLEDIF…NMWHFLQQEL (160 aa)) constitute a JmjC domain. Histidine 194, aspartate 196, and histidine 274 together coordinate Fe cation.

The protein belongs to the JMJD6 family. In terms of assembly, interacts with ETF1. Interacts with the ETF1-GSPT1 complex. Fe(2+) serves as cofactor.

It localises to the cytoplasm. The enzyme catalyses L-lysyl-[protein] + 2-oxoglutarate + O2 = 4-hydroxy-L-lysyl-[protein] + succinate + CO2. Catalyzes the 2-oxoglutarate and iron-dependent C4-lysyl hydroxylation of ETF1 at 'Lys-63' thereby promoting the translational termination efficiency of ETF1. Not essential for embryonic stem cell (ESC) maintenance and the embryonic and postnatal development. This is 2-oxoglutarate and iron-dependent oxygenase JMJD4 (Jmjd4) from Mus musculus (Mouse).